The chain runs to 922 residues: Lysine-specific demethylase 7A (922 aa).

The segment at 6–57 adopts a PHD-type zinc-finger fold; it reads PVYCVCRQPYDVSRFMIECDICKDWFHSSCVKVEEHQAADIDLYHCPNCEVL. Positions 199–355 constitute a JmjC domain; it reads FSDTKMADLV…MQLRCYEMEK (157 aa). T248 contacts substrate. Residues H251 and D253 each coordinate Fe cation. Residue K268 participates in substrate binding. Position 323 (H323) interacts with Fe cation. Disordered stretches follow at residues 445–490, 565–607, 622–711, 754–773, and 872–902; these read EEEG…TKTP, RSLY…TQKP, GSSE…EQEA, GKEH…HHVK, and LHPT…MATA. Positions 473 to 483 are enriched in basic residues; sequence HHSGRKARRLR. Over residues 648–666 the composition is skewed to acidic residues; the sequence is ESESSGDDDDEEEEEEEER. Composition is skewed to basic and acidic residues over residues 667-683 and 691-701; these read QEPI…RRLP and PDHDSPQKREC.

This sequence belongs to the JHDM1 histone demethylase family. JHDM1D subfamily. Fe(2+) serves as cofactor.

The protein localises to the nucleus. Histone demethylase required for brain development. Specifically demethylates dimethylated 'Lys-9' and 'Lys-27' (H3K9me2 and H3K27me2, respectively) of histone H3 and monomethylated histone H4 'Lys-20' residue (H4K20Me1), thereby playing a central role in histone code. In Xenopus tropicalis (Western clawed frog), this protein is Lysine-specific demethylase 7A (kdm7a).